A 400-amino-acid polypeptide reads, in one-letter code: Serine/threonine-protein kinase AFC3 (400 aa).

The tract at residues 1–29 (MIANGFESMDKERVRKRPRMTWDEAPAEP) is disordered. In terms of domain architecture, Protein kinase spans 71–396 (YKILSKMGEG…ANEALDHPFF (326 aa)). Residues 77-85 (MGEGTFGRV) and lysine 100 contribute to the ATP site. The active-site Proton acceptor is the aspartate 196.

This sequence belongs to the protein kinase superfamily. CMGC Ser/Thr protein kinase family. Lammer subfamily.

The catalysed reaction is L-seryl-[protein] + ATP = O-phospho-L-seryl-[protein] + ADP + H(+). It carries out the reaction L-threonyl-[protein] + ATP = O-phospho-L-threonyl-[protein] + ADP + H(+). It catalyses the reaction L-tyrosyl-[protein] + ATP = O-phospho-L-tyrosyl-[protein] + ADP + H(+). The sequence is that of Serine/threonine-protein kinase AFC3 (AFC3) from Arabidopsis thaliana (Mouse-ear cress).